Here is a 1004-residue protein sequence, read N- to C-terminus: Kinesin-like protein KIN-7I (1004 aa).

A Kinesin motor domain is found at 6–326 (KILVSVRVRP…LLFATCAKEV (321 aa)). Residue 89-96 (GQTSSGKT) coordinates ATP. 3 coiled-coil regions span residues 335–402 (VVSE…AQSR), 517–576 (KKEY…QKQS), and 634–661 (SVEKEDTKKNLSSKKEDLKQNLSMDQSE). 3 disordered regions span residues 567–599 (EQSVEKQKQSPKKEEMEQYLSRDMSEQVTKSLP), 628–671 (SQQT…PEDE), and 802–830 (TMQHHSTHSDDTDTKTMKPENTDDGGEKT). Composition is skewed to basic and acidic residues over residues 569-582 (SVEKQKQSPKKEEM) and 634-652 (SVEKEDTKKNLSSKKEDLK). A compositionally biased stretch (polar residues) spans 653-663 (QNLSMDQSEQL). A Glycyl lysine isopeptide (Lys-Gly) (interchain with G-Cter in ubiquitin) cross-link involves residue Lys-881.

This sequence belongs to the TRAFAC class myosin-kinesin ATPase superfamily. Kinesin family. KIN-7 subfamily.

The polypeptide is Kinesin-like protein KIN-7I (Arabidopsis thaliana (Mouse-ear cress)).